A 497-amino-acid chain; its full sequence is Probable cytosol aminopeptidase (497 aa).

Lys264 and Asp269 together coordinate Mn(2+). The active site involves Lys276. Residues Asp287, Asp347, and Glu349 each contribute to the Mn(2+) site. Arg351 is a catalytic residue.

Belongs to the peptidase M17 family. It depends on Mn(2+) as a cofactor.

Its subcellular location is the cytoplasm. The enzyme catalyses Release of an N-terminal amino acid, Xaa-|-Yaa-, in which Xaa is preferably Leu, but may be other amino acids including Pro although not Arg or Lys, and Yaa may be Pro. Amino acid amides and methyl esters are also readily hydrolyzed, but rates on arylamides are exceedingly low.. The catalysed reaction is Release of an N-terminal amino acid, preferentially leucine, but not glutamic or aspartic acids.. In terms of biological role, presumably involved in the processing and regular turnover of intracellular proteins. Catalyzes the removal of unsubstituted N-terminal amino acids from various peptides. This is Probable cytosol aminopeptidase from Thermosynechococcus vestitus (strain NIES-2133 / IAM M-273 / BP-1).